The primary structure comprises 2110 residues: Protein Ycf2 (2110 aa).

1336 to 1343 (GSIGTGRS) lines the ATP pocket. Residues 1852–1876 (EEEAELQDEEAELQDEGAGRKDEEA) are disordered. Acidic residues predominate over residues 1854 to 1866 (EAELQDEEAELQD).

This sequence belongs to the Ycf2 family.

It localises to the plastid. The protein localises to the chloroplast stroma. Functionally, probable ATPase of unknown function. Its presence in a non-photosynthetic plant (Epifagus virginiana) and experiments in tobacco indicate that it has an essential function which is probably not related to photosynthesis. This is Protein Ycf2 (ycf2-A) from Pelargonium hortorum (Common geranium).